We begin with the raw amino-acid sequence, 230 residues long: Maleylacetoacetate isomerase (230 aa).

A GST N-terminal domain is found at L7–P95. Glutathione-binding positions include S17–R22, Q46, V60, Q79–S80, Q123, and N127–R129. The GST C-terminal domain maps to N104–T226.

This sequence belongs to the GST superfamily. Zeta family. Glutathione is required as a cofactor.

Its subcellular location is the cytoplasm. It carries out the reaction 4-maleylacetoacetate = 4-fumarylacetoacetate. It functions in the pathway amino-acid degradation; L-phenylalanine degradation; acetoacetate and fumarate from L-phenylalanine: step 5/6. The sequence is that of Maleylacetoacetate isomerase (maiA) from Emericella nidulans (strain FGSC A4 / ATCC 38163 / CBS 112.46 / NRRL 194 / M139) (Aspergillus nidulans).